A 181-amino-acid polypeptide reads, in one-letter code: Probable chemoreceptor glutamine deamidase CheD (181 aa).

Belongs to the CheD family.

The enzyme catalyses L-glutaminyl-[protein] + H2O = L-glutamyl-[protein] + NH4(+). Probably deamidates glutamine residues to glutamate on methyl-accepting chemotaxis receptors (MCPs), playing an important role in chemotaxis. This is Probable chemoreceptor glutamine deamidase CheD from Agrobacterium fabrum (strain C58 / ATCC 33970) (Agrobacterium tumefaciens (strain C58)).